Reading from the N-terminus, the 1036-residue chain is Isoleucine--tRNA ligase (1036 aa).

Positions Pro48 to His58 match the 'HIGH' region motif. The short motif at Lys590–Ser594 is the 'KMSKS' region element. Lys593 serves as a coordination point for ATP.

It belongs to the class-I aminoacyl-tRNA synthetase family. IleS type 2 subfamily. Monomer. The cofactor is Zn(2+).

The protein resides in the cytoplasm. It catalyses the reaction tRNA(Ile) + L-isoleucine + ATP = L-isoleucyl-tRNA(Ile) + AMP + diphosphate. Catalyzes the attachment of isoleucine to tRNA(Ile). As IleRS can inadvertently accommodate and process structurally similar amino acids such as valine, to avoid such errors it has two additional distinct tRNA(Ile)-dependent editing activities. One activity is designated as 'pretransfer' editing and involves the hydrolysis of activated Val-AMP. The other activity is designated 'posttransfer' editing and involves deacylation of mischarged Val-tRNA(Ile). In Clostridium tetani (strain Massachusetts / E88), this protein is Isoleucine--tRNA ligase.